Consider the following 931-residue polypeptide: Neuropilin-2 (931 aa).

The first 20 residues, Met-1–Val-20, serve as a signal peptide directing secretion. Residues Arg-21–Pro-864 lie on the Extracellular side of the membrane. Disulfide bonds link Cys-28-Cys-55, Cys-83-Cys-105, and Cys-149-Cys-175. 2 CUB domains span residues Cys-28–Phe-142 and Cys-149–Ile-267. Asn-152 and Asn-157 each carry an N-linked (GlcNAc...) asparagine glycan. Ca(2+)-binding residues include Glu-197, Asp-211, and Asp-252. Cys-208 and Cys-230 form a disulfide bridge. Cystine bridges form between Cys-277-Cys-427 and Cys-434-Cys-592. 2 consecutive F5/8 type C domains span residues Cys-277–Cys-427 and Cys-434–Cys-592. Positions Thr-298 to Arg-310 are enriched in polar residues. Residues Thr-298–Gly-317 form a disordered region. Residues Val-601–Glu-621 are disordered. Asn-629 carries an N-linked (GlcNAc...) asparagine glycan. Positions Ser-642–Glu-802 constitute an MAM domain. The disordered stretch occupies residues Thr-819–Lys-854. A compositionally biased stretch (acidic residues) spans Gly-824–Gly-835. Positions Asp-836–Ser-851 are enriched in low complexity. N-linked (GlcNAc...) asparagine glycosylation occurs at Asn-839. A helical transmembrane segment spans residues Ile-865–Tyr-889. The Cytoplasmic segment spans residues Cys-890–Ala-931.

It belongs to the neuropilin family. As to quaternary structure, heterodimer with NRP1. Binds PLXNB1. As to expression, expressed in developing CNS, PNS and in some nonneural tissues including limb buds, developing bones, muscles, intestinal epithelium, kidney, lung and submandibular gland.

It localises to the membrane. In terms of biological role, high affinity receptor for semaphorins 3C, 3F, VEGF-165 and VEGF-145 isoforms of VEGF, and the PLGF-2 isoform of PGF. This chain is Neuropilin-2 (Nrp2), found in Mus musculus (Mouse).